The chain runs to 127 residues: Fluoride-specific ion channel FluC (127 aa).

Helical transmembrane passes span 8–28 (LLIA…QYWF), 37–57 (PWGT…VYAI), 68–88 (WKFL…TFSY), and 100–120 (ILFL…AFAG). Residues Gly78 and Thr81 each coordinate Na(+).

Belongs to the fluoride channel Fluc/FEX (TC 1.A.43) family.

Its subcellular location is the cell inner membrane. It catalyses the reaction fluoride(in) = fluoride(out). Na(+) is not transported, but it plays an essential structural role and its presence is essential for fluoride channel function. Functionally, fluoride-specific ion channel. Important for reducing fluoride concentration in the cell, thus reducing its toxicity. This is Fluoride-specific ion channel FluC from Leptospira interrogans serogroup Icterohaemorrhagiae serovar copenhageni (strain Fiocruz L1-130).